Consider the following 493-residue polypeptide: Ectonucleotide pyrophosphatase/phosphodiesterase 2 (493 aa).

Over 1–28 (MLLFEQPVDLEKNNEDDTNIKPFAISRH) the chain is Cytoplasmic. The helical; Signal-anchor for type II membrane protein transmembrane segment at 29–45 (FLLKLLLCGIILIELLL) threads the bilayer. At 46–493 (YSKCPKPIDN…KTKKEKSLLQ (448 aa)) the chain is on the extracellular side. 3 N-linked (GlcNAc...) asparagine glycosylation sites follow: N62, N69, and N112. The interval 76-438 (TLTILISIDG…IGIMGTHGYN (363 aa)) is phosphodiesterase. The Nucleophile role is filled by T127. N-linked (GlcNAc...) asparagine glycans are attached at residues N153 and N441.

The protein belongs to the nucleotide pyrophosphatase/phosphodiesterase family. In terms of processing, autophosphorylated as part of the catalytic cycle of phosphodiesterase/pyrophosphatase activity.

Its subcellular location is the membrane. It catalyses the reaction Hydrolytically removes 5'-nucleotides successively from the 3'-hydroxy termini of 3'-hydroxy-terminated oligonucleotides.. The catalysed reaction is a ribonucleoside 5'-triphosphate + H2O = a ribonucleoside 5'-phosphate + diphosphate + H(+). The enzyme catalyses a 2'-deoxyribonucleoside 5'-triphosphate + H2O = a 2'-deoxyribonucleoside 5'-phosphate + diphosphate + H(+). Mediates extracellular nucleotide derived phosphate hydrolysis along with NPP1 and PHO5. The protein is Ectonucleotide pyrophosphatase/phosphodiesterase 2 (NPP2) of Saccharomyces cerevisiae (strain ATCC 204508 / S288c) (Baker's yeast).